Reading from the N-terminus, the 398-residue chain is Cystathionine gamma-lyase (398 aa).

The residue at position 50 (Ser50) is a Phosphoserine. Residues Arg61, Tyr113, and Arg118 each contribute to the substrate site. Residue Lys211 is modified to N6-(pyridoxal phosphate)lysine. Residue Glu338 participates in substrate binding.

This sequence belongs to the trans-sulfuration enzymes family. As to quaternary structure, homotetramer. Interacts with CALM in a calcium-dependent manner. The cofactor is pyridoxal 5'-phosphate.

The protein resides in the cytoplasm. The enzyme catalyses L,L-cystathionine + H2O = 2-oxobutanoate + L-cysteine + NH4(+). The catalysed reaction is L-homoserine = 2-oxobutanoate + NH4(+). It catalyses the reaction L-selenocystathionine + H2O = L-selenocysteine + 2-oxobutanoate + NH4(+). It carries out the reaction L-cysteine + H2O = hydrogen sulfide + pyruvate + NH4(+) + H(+). The enzyme catalyses L-homocysteine + H2O = 2-oxobutanoate + hydrogen sulfide + NH4(+) + H(+). It participates in amino-acid biosynthesis; L-cysteine biosynthesis; L-cysteine from L-homocysteine and L-serine: step 2/2. Functionally, catalyzes the last step in the trans-sulfuration pathway from L-methionine to L-cysteine in a pyridoxal-5'-phosphate (PLP)-dependent manner, which consists on cleaving the L,L-cystathionine molecule into L-cysteine, ammonia and 2-oxobutanoate. Part of the L-cysteine derived from the trans-sulfuration pathway is utilized for biosynthesis of the ubiquitous antioxidant glutathione. Besides its role in the conversion of L-cystathionine into L-cysteine, it utilizes L-cysteine and L-homocysteine as substrates (at much lower rates than L,L-cystathionine) to produce hydrogen sulfide (H2S). In vitro, it converts two L-cysteine molecules into lanthionine and H2S, and two L-homocysteine molecules to homolanthionine and H2S, which can be particularly relevant under conditions of severe hyperhomocysteinemia. Lanthionine and homolanthionine are structural homologs of L,L-cystathionine that differ by the absence or presence of an extra methylene group, respectively. Acts as a cysteine-protein sulfhydrase by mediating sulfhydration of target proteins: sulfhydration consists of converting -SH groups into -SSH on specific cysteine residues of target proteins such as GAPDH, PTPN1 and NF-kappa-B subunit RELA, thereby regulating their function. By generating the gasotransmitter H2S, it participates in a number of physiological processes such as vasodilation, bone protection, and inflammation. Plays an essential role in myogenesis by contributing to the biogenesis of H2S in skeletal muscle tissue. Can also accept homoserine as substrate. Catalyzes the elimination of selenocystathionine (which can be derived from the diet) to yield selenocysteine, ammonia and 2-oxobutanoate. The polypeptide is Cystathionine gamma-lyase (Cth) (Rattus norvegicus (Rat)).